A 432-amino-acid chain; its full sequence is Adenylosuccinate synthetase (432 aa).

Residues 12–18 (GDEGKGK) and 40–42 (GHT) each bind GTP. The active-site Proton acceptor is aspartate 13. Aspartate 13 and glycine 40 together coordinate Mg(2+). IMP contacts are provided by residues 13 to 16 (DEGK), 38 to 41 (NAGH), threonine 130, arginine 144, glutamine 225, threonine 240, and arginine 304. Histidine 41 (proton donor) is an active-site residue. Residue 300–306 (STTGRPR) participates in substrate binding. GTP is bound by residues arginine 306, 332 to 334 (KLD), and 414 to 416 (SVG).

It belongs to the adenylosuccinate synthetase family. As to quaternary structure, homodimer. Mg(2+) serves as cofactor.

The protein localises to the cytoplasm. The enzyme catalyses IMP + L-aspartate + GTP = N(6)-(1,2-dicarboxyethyl)-AMP + GDP + phosphate + 2 H(+). The protein operates within purine metabolism; AMP biosynthesis via de novo pathway; AMP from IMP: step 1/2. Its function is as follows. Plays an important role in the de novo pathway of purine nucleotide biosynthesis. Catalyzes the first committed step in the biosynthesis of AMP from IMP. This Citrifermentans bemidjiense (strain ATCC BAA-1014 / DSM 16622 / JCM 12645 / Bem) (Geobacter bemidjiensis) protein is Adenylosuccinate synthetase.